The primary structure comprises 239 residues: Fatty acid metabolism regulator protein (239 aa).

Residues 6 to 74 enclose the HTH gntR-type domain; the sequence is QSPAGFAEEY…HGKPTKVNNF (69 aa). Residues 34 to 53 constitute a DNA-binding region (H-T-H motif); the sequence is ERELSELIGVTRTTLREVLQ.

In terms of assembly, homodimer.

It localises to the cytoplasm. Its function is as follows. Multifunctional regulator of fatty acid metabolism. The protein is Fatty acid metabolism regulator protein of Klebsiella pneumoniae subsp. pneumoniae (strain ATCC 700721 / MGH 78578).